A 479-amino-acid chain; its full sequence is Serralysin C (479 aa).

Residues 1–17 (MGKNLSLRQDDAQHALS) constitute a propeptide that is removed on maturation. H188 lines the Zn(2+) pocket. E189 is a catalytic residue. Zn(2+) contacts are provided by H192 and Y228. Ca(2+)-binding residues include R265, G267, D297, G299, G300, D302, T339, E341, G346, G348, D350, N355, A357, N359, G363, G364, A365, G366, D368, G372, G373, G375, D377, G381, G382, A383, G384, D386, D395, D402, and D412. 3 Hemolysin-type calcium-binding repeats span residues 344-361 (IGGS…DNIL), 362-379 (QGGA…ADTL), and 380-397 (YGGA…QDST).

Belongs to the peptidase M10B family. The cofactor is Ca(2+). Requires Zn(2+) as cofactor.

It localises to the secreted. It carries out the reaction Preferential cleavage of bonds with hydrophobic residues in P1'.. In Dickeya chrysanthemi (Pectobacterium chrysanthemi), this protein is Serralysin C (prtC).